The sequence spans 434 residues: Methyl-coenzyme M reductase subunit beta (434 aa).

Position 365 (Y365) interacts with coenzyme M. Position 367 (G367) interacts with coenzyme B.

This sequence belongs to the methyl-coenzyme M reductase beta subunit family. In terms of assembly, MCR is a hexamer of two alpha, two beta, and two gamma chains, forming a dimer of heterotrimers. Requires coenzyme F430 as cofactor.

Its subcellular location is the cytoplasm. It carries out the reaction coenzyme B + methyl-coenzyme M = methane + coenzyme M-coenzyme B heterodisulfide. Its pathway is one-carbon metabolism; methyl-coenzyme M reduction; methane from methyl-coenzyme M: step 1/1. In terms of biological role, component of the methyl-coenzyme M reductase (MCR) I that catalyzes the reductive cleavage of methyl-coenzyme M (CoM-S-CH3 or 2-(methylthio)ethanesulfonate) using coenzyme B (CoB or 7-mercaptoheptanoylthreonine phosphate) as reductant which results in the production of methane and the mixed heterodisulfide of CoB and CoM (CoM-S-S-CoB). This is the final step in methanogenesis. The chain is Methyl-coenzyme M reductase subunit beta (mcrB) from Methanosarcina barkeri (strain Fusaro / DSM 804).